Here is a 207-residue protein sequence, read N- to C-terminus: Large ribosomal subunit protein uL4 (207 aa).

The disordered stretch occupies residues 50–76 (AVKNRSAVSGGGRKPWKQKGTGRARQG).

It belongs to the universal ribosomal protein uL4 family. As to quaternary structure, part of the 50S ribosomal subunit.

Functionally, one of the primary rRNA binding proteins, this protein initially binds near the 5'-end of the 23S rRNA. It is important during the early stages of 50S assembly. It makes multiple contacts with different domains of the 23S rRNA in the assembled 50S subunit and ribosome. Forms part of the polypeptide exit tunnel. The polypeptide is Large ribosomal subunit protein uL4 (Staphylococcus aureus (strain MRSA252)).